The sequence spans 196 residues: Mitochondrial inner membrane protein SHH3 (196 aa).

A mitochondrion-targeting transit peptide spans 1–53 (MKATIQRVTSVFGVPRASVFVPRISTPFILHNYISNGRMDLFSKEFHNGRVSK). Residues 54-97 (SDLWSSNKEEELLVSQRKKRPISPHLTVYEPEMSWYLSSLHRIS) lie on the Mitochondrial matrix side of the membrane. S91 and R95 together coordinate a ubiquinone. A helical membrane pass occupies residues 98-118 (GVLLALGFYAFTITLGVTTIM). Residues 119–137 (GMDTTFQDLNKWYHEKMPK) lie on the Mitochondrial intermembrane side of the membrane. A helical transmembrane segment spans residues 138–160 (WSQWVAKGSAAYLFAFHFGNGIR). H154 serves as a coordination point for heme. Residues 161-174 (HLIWDMGYELTNRG) are Mitochondrial matrix-facing. The helical transmembrane segment at 175–195 (VIKTGSIVLAGTLVLGTYLLA) threads the bilayer. Q196 is a topological domain (mitochondrial intermembrane).

Belongs to the cytochrome b560 family.

It is found in the mitochondrion inner membrane. In terms of biological role, homolog of SDH3, but seems not to be a stoichiometric subunit of either the succinate dehydrogenase (SDH) complex or the mitochondrial inner membrane translocase TIM22 complex. The polypeptide is Mitochondrial inner membrane protein SHH3 (Saccharomyces cerevisiae (strain ATCC 204508 / S288c) (Baker's yeast)).